We begin with the raw amino-acid sequence, 529 residues long: ATP synthase subunit alpha (529 aa).

Residue 173 to 180 (GDRQTGKT) coordinates ATP.

It belongs to the ATPase alpha/beta chains family. In terms of assembly, F-type ATPases have 2 components, CF(1) - the catalytic core - and CF(0) - the membrane proton channel. CF(1) has five subunits: alpha(3), beta(3), gamma(1), delta(1), epsilon(1). CF(0) has three main subunits: a(1), b(2) and c(9-12). The alpha and beta chains form an alternating ring which encloses part of the gamma chain. CF(1) is attached to CF(0) by a central stalk formed by the gamma and epsilon chains, while a peripheral stalk is formed by the delta and b chains.

Its subcellular location is the cell membrane. The enzyme catalyses ATP + H2O + 4 H(+)(in) = ADP + phosphate + 5 H(+)(out). Functionally, produces ATP from ADP in the presence of a proton gradient across the membrane. The alpha chain is a regulatory subunit. The polypeptide is ATP synthase subunit alpha (Streptomyces lividans).